The chain runs to 201 residues: Small ribosomal subunit protein uS4c (201 aa).

Positions 89 to 149 constitute an S4 RNA-binding domain; sequence MRLDNILFRL…DEQKSRALIQ (61 aa).

It belongs to the universal ribosomal protein uS4 family. Part of the 30S ribosomal subunit. Contacts protein S5. The interaction surface between S4 and S5 is involved in control of translational fidelity.

It is found in the plastid. Its subcellular location is the chloroplast. One of the primary rRNA binding proteins, it binds directly to 16S rRNA where it nucleates assembly of the body of the 30S subunit. Its function is as follows. With S5 and S12 plays an important role in translational accuracy. This is Small ribosomal subunit protein uS4c (rps4) from Coffea arabica (Arabian coffee).